We begin with the raw amino-acid sequence, 257 residues long: Ribonuclease HII (257 aa).

Residues 72-257 enclose the RNase H type-2 domain; the sequence is TYIAGIDEVG…FAPIKDMIQK (186 aa). 3 residues coordinate a divalent metal cation: Asp78, Glu79, and Asp170.

It belongs to the RNase HII family. It depends on Mn(2+) as a cofactor. Requires Mg(2+) as cofactor.

It is found in the cytoplasm. It catalyses the reaction Endonucleolytic cleavage to 5'-phosphomonoester.. Its function is as follows. Endonuclease that specifically degrades the RNA of RNA-DNA hybrids. This chain is Ribonuclease HII, found in Bacillus cereus (strain ZK / E33L).